The sequence spans 428 residues: Serine--tRNA ligase (428 aa).

Residue 231 to 233 coordinates L-serine; sequence TAE. 262 to 264 provides a ligand contact to ATP; sequence RSE. Glu-285 contacts L-serine. 349 to 352 provides a ligand contact to ATP; that stretch reads EISS. Residue Ser-385 coordinates L-serine.

Belongs to the class-II aminoacyl-tRNA synthetase family. Type-1 seryl-tRNA synthetase subfamily. Homodimer. The tRNA molecule binds across the dimer.

Its subcellular location is the cytoplasm. The enzyme catalyses tRNA(Ser) + L-serine + ATP = L-seryl-tRNA(Ser) + AMP + diphosphate + H(+). It catalyses the reaction tRNA(Sec) + L-serine + ATP = L-seryl-tRNA(Sec) + AMP + diphosphate + H(+). It functions in the pathway aminoacyl-tRNA biosynthesis; selenocysteinyl-tRNA(Sec) biosynthesis; L-seryl-tRNA(Sec) from L-serine and tRNA(Sec): step 1/1. Functionally, catalyzes the attachment of serine to tRNA(Ser). Is also able to aminoacylate tRNA(Sec) with serine, to form the misacylated tRNA L-seryl-tRNA(Sec), which will be further converted into selenocysteinyl-tRNA(Sec). This Staphylococcus aureus (strain MW2) protein is Serine--tRNA ligase.